A 389-amino-acid polypeptide reads, in one-letter code: Putative cyclin-F3-1 (389 aa).

The interval 1 to 103 (MEAAAAAAAE…GAAGGSRQPV (103 aa)) is disordered. Positions 19–43 (VEGAAVAAVAPEAAAEGPSEPNAGE) are enriched in low complexity.

The protein belongs to the cyclin family. Cyclin F subfamily.

This is Putative cyclin-F3-1 (CYCF3-1) from Oryza sativa subsp. japonica (Rice).